Here is a 443-residue protein sequence, read N- to C-terminus: Exodeoxyribonuclease 7 large subunit (443 aa).

It belongs to the XseA family. As to quaternary structure, heterooligomer composed of large and small subunits.

The protein localises to the cytoplasm. It carries out the reaction Exonucleolytic cleavage in either 5'- to 3'- or 3'- to 5'-direction to yield nucleoside 5'-phosphates.. Its function is as follows. Bidirectionally degrades single-stranded DNA into large acid-insoluble oligonucleotides, which are then degraded further into small acid-soluble oligonucleotides. This chain is Exodeoxyribonuclease 7 large subunit, found in Vibrio campbellii (strain ATCC BAA-1116).